A 249-amino-acid polypeptide reads, in one-letter code: Pleckstrin homology domain-containing family F member 2 (249 aa).

One can recognise a PH domain in the interval 35–131 (VLIGEGVLTK…WMNHINKCVS (97 aa)). The segment at 152-212 (DSEATVCMRC…ICDSCYDLLS (61 aa)) adopts an FYVE-type zinc-finger fold. Positions 158, 161, 175, 178, 183, 186, 204, and 207 each coordinate Zn(2+). Polar residues predominate over residues 219–232 (CQSTRSDSYSQSPK). Positions 219-249 (CQSTRSDSYSQSPKSSLNDASDDDDDEDSSD) are disordered. Positions 238 to 249 (ASDDDDDEDSSD) are enriched in acidic residues.

It localises to the early endosome membrane. Its subcellular location is the endoplasmic reticulum. In terms of biological role, may play a role in early endosome fusion upstream of RAB5, hence regulating receptor trafficking and fluid-phase transport. Enhances cellular sensitivity to TNF-induced apoptosis. This Gallus gallus (Chicken) protein is Pleckstrin homology domain-containing family F member 2 (PLEKHF2).